The following is a 319-amino-acid chain: BTB/POZ domain-containing adapter for CUL3-mediated RhoA degradation protein 2 (319 aa).

One can recognise a BTB domain in the interval 31 to 99; sequence KYIRLNVGGC…LRDDTIALPK (69 aa).

The protein belongs to the BACURD family. Component of the BCR(TNFAIP1) E3 ubiquitin ligase complex, at least composed of cul3, tnfaip1/bacurd2 and rbx1.

Its subcellular location is the cytoplasm. It localises to the nucleus. It is found in the endosome. It participates in protein modification; protein ubiquitination. Functionally, substrate-specific adapter of a BCR (BTB-CUL3-RBX1) E3 ubiquitin-protein ligase complex involved in regulation of cytoskeleton structure. The BCR(TNFAIP1) E3 ubiquitin ligase complex mediates the ubiquitination of target proteins, leading to their degradation by the proteasome. This Xenopus laevis (African clawed frog) protein is BTB/POZ domain-containing adapter for CUL3-mediated RhoA degradation protein 2 (tnfaip1).